The sequence spans 294 residues: uncharacterized protein (294 aa).

3 helical membrane-spanning segments follow: residues 21–41, 51–71, and 77–97; these read AIVATNFSWLFITFFVMTFTF, PIIWTLYFFLCLIAFLLLWAA, and ILFSFAFGDVYSFFMAGVFLF. Positions 156 to 176 are disordered; the sequence is HPVPFPAEPGSPDPVSPPPPI. The stretch at 184–215 forms a coiled coil; it reads ERAESLHAGNIELAEDLQRIQEMERNLENERS. Residues 265-277 are compositionally biased toward basic and acidic residues; the sequence is QQENESRLEERRF. Residues 265 to 294 form a disordered region; that stretch reads QQENESRLEERRFQSHSTNSLFEADSSRDN.

It is found in the mitochondrion membrane. This is an uncharacterized protein from Arabidopsis thaliana (Mouse-ear cress).